The sequence spans 433 residues: Trigger factor (433 aa).

The PPIase FKBP-type domain maps to Gly-163 to Pro-248.

It belongs to the FKBP-type PPIase family. Tig subfamily.

It is found in the cytoplasm. The catalysed reaction is [protein]-peptidylproline (omega=180) = [protein]-peptidylproline (omega=0). In terms of biological role, involved in protein export. Acts as a chaperone by maintaining the newly synthesized protein in an open conformation. Functions as a peptidyl-prolyl cis-trans isomerase. This Nitratidesulfovibrio vulgaris (strain DP4) (Desulfovibrio vulgaris) protein is Trigger factor.